The sequence spans 879 residues: Pentatricopeptide repeat-containing protein At1g71210, mitochondrial (879 aa).

The N-terminal 44 residues, 1–44, are a transit peptide targeting the mitochondrion; it reads MLRCWSVTVERSCEGMLLRRRILSLSASSFRNFTSGNNGDAIPF. 16 PPR repeats span residues 181 to 215, 216 to 246, 250 to 280, 285 to 319, 320 to 355, 356 to 390, 391 to 425, 426 to 460, 461 to 495, 496 to 530, 531 to 565, 566 to 597, 602 to 636, 637 to 667, 671 to 705, and 706 to 740; these read SLRL…GLDL, DSFG…ISVR, CAVT…LLPN, CGSG…GTVN, MDRA…GCEL, EVFR…GVSP, NKKT…GFAP, TAMS…GHFL, GGKT…DLLP, KRIA…GVDT, SFKM…GYTP, TRSL…FQLS, KVQA…GITP, TVAS…LREQ, KKRL…GLQP, and SIEC…GRRI.

Belongs to the PPR family. P subfamily.

The protein localises to the mitochondrion. The polypeptide is Pentatricopeptide repeat-containing protein At1g71210, mitochondrial (Arabidopsis thaliana (Mouse-ear cress)).